Reading from the N-terminus, the 1382-residue chain is DNA-directed RNA polymerase subunit beta' (1382 aa).

Residues Cys-70, Cys-72, Cys-85, and Cys-88 each contribute to the Zn(2+) site. 3 residues coordinate Mg(2+): Asp-460, Asp-462, and Asp-464. Zn(2+) contacts are provided by Cys-808, Cys-882, Cys-889, and Cys-892.

This sequence belongs to the RNA polymerase beta' chain family. The RNAP catalytic core consists of 2 alpha, 1 beta, 1 beta' and 1 omega subunit. When a sigma factor is associated with the core the holoenzyme is formed, which can initiate transcription. It depends on Mg(2+) as a cofactor. Zn(2+) serves as cofactor.

The enzyme catalyses RNA(n) + a ribonucleoside 5'-triphosphate = RNA(n+1) + diphosphate. Functionally, DNA-dependent RNA polymerase catalyzes the transcription of DNA into RNA using the four ribonucleoside triphosphates as substrates. This chain is DNA-directed RNA polymerase subunit beta', found in Citrifermentans bemidjiense (strain ATCC BAA-1014 / DSM 16622 / JCM 12645 / Bem) (Geobacter bemidjiensis).